The sequence spans 147 residues: Protein archease (147 aa).

Positions 17, 146, and 147 each coordinate Ca(2+).

The protein belongs to the archease family.

In terms of biological role, activates the tRNA-splicing ligase complex by facilitating the enzymatic turnover of catalytic subunit RtcB. Acts by promoting the guanylylation of RtcB, a key intermediate step in tRNA ligation. Can also alter the NTP specificity of RtcB such that ATP, dGTP or ITP is used efficiently. This Pyrobaculum calidifontis (strain DSM 21063 / JCM 11548 / VA1) protein is Protein archease.